Reading from the N-terminus, the 377-residue chain is Flagellin D (377 aa).

Positions 104-128 (NSKADRVAIQEEVTALNDELNRIAE) form a coiled coil.

It belongs to the bacterial flagellin family. In terms of assembly, heteromer of multiple flagellin subunits including FlaA, FlaB, FlaC, FlaD and possibly FlaE.

The protein resides in the secreted. Its subcellular location is the bacterial flagellum. Functionally, flagellin is the subunit protein which polymerizes to form the filaments of bacterial flagella. FlaD is not essential for flagellar synthesis and motility. May have a role in virulence unrelated to motility. In Vibrio anguillarum (Listonella anguillarum), this protein is Flagellin D (flaD).